The primary structure comprises 317 residues: Hps1-dma1 cluster cytochrome P450 monooxygenase cyp3.1 (317 aa).

The interval 183–205 (PAIETDRKTSSHSRSPTALADKQ) is disordered. C260 provides a ligand contact to heme.

Belongs to the cytochrome P450 family. Heme serves as cofactor.

Its pathway is secondary metabolite biosynthesis. Its function is as follows. Cytochrome P450 monooxygenase; part of the hps1-dma1 gene cluster that probably mediates the biosynthesis a derivative of cyclopiazonic acid (CPA). The hybrid polyketide synthase-nonribosomal peptide synthetase (PKS-NRPS) nps1 might incorporates acetyl-CoA, malonyl-CoA, and tryptophan (Trp) and utilizes a C-terminal redox-incompetent reductase domain to make and release the tryptophan tetramic acid, cyclo-acetoacetyl-L-tryptophan (c-AATrp), as the first intermediate in the pathway. In addition, the cluster also includes the tryptophan dimethylallyltransferase dma1, the FAD-dependent oxidoreductase toxD, the cytochrome P450 monooxygenase cyp3.1 and the methyltransferase DOTSEDRAFT_139328; the latter 2 being not present in all CPA-producing fungi but involved in additional modifications that occur in biosynthesis the of a range of CPA and CPA-like products. Further studies are required to clarify whether the CPA-like hps1-dma1 cluster is functional or a non-functional relic reflecting evolution of D.septosporum. The chain is Hps1-dma1 cluster cytochrome P450 monooxygenase cyp3.1 (cyp3.1) from Dothistroma septosporum (strain NZE10 / CBS 128990) (Red band needle blight fungus).